The primary structure comprises 648 residues: Cysteine-rich receptor-like protein kinase 38 (648 aa).

Positions 1 to 25 (MKNSAAIFLTSSLILLLQTLHGVKA) are cleaved as a signal peptide. Gnk2-homologous domains follow at residues 26–127 (GFIC…DQST) and 140–247 (PSPV…FYPF). Residues 26 to 278 (GFICVGSSFP…EAISITRLKG (253 aa)) lie on the Extracellular side of the membrane. Asn37, Asn63, Asn151, Asn174, and Asn253 each carry an N-linked (GlcNAc...) asparagine glycan. A helical membrane pass occupies residues 279–299 (GIIAIFVVPIVINLLVFIGLI). The Cytoplasmic segment spans residues 300–648 (RAYTRIRKSY…ELSITELSPR (349 aa)). The Protein kinase domain occupies 339–611 (FSFENKIGQG…VIQWLGSETI (273 aa)). Residues 345–353 (IGQGGFGSV) and Lys367 each bind ATP. Residue Tyr412 is modified to Phosphotyrosine. The Proton acceptor role is filled by Asp464. Ser468 carries the post-translational modification Phosphoserine. Residue Thr504 is modified to Phosphothreonine. Tyr512 bears the Phosphotyrosine mark.

It belongs to the protein kinase superfamily. Ser/Thr protein kinase family. CRK subfamily.

It localises to the membrane. The enzyme catalyses L-seryl-[protein] + ATP = O-phospho-L-seryl-[protein] + ADP + H(+). The catalysed reaction is L-threonyl-[protein] + ATP = O-phospho-L-threonyl-[protein] + ADP + H(+). The chain is Cysteine-rich receptor-like protein kinase 38 (CRK38) from Arabidopsis thaliana (Mouse-ear cress).